Consider the following 78-residue polypeptide: Probable [Fe-S]-dependent transcriptional repressor (78 aa).

Iron-sulfur cluster-binding residues include Cys-56, Cys-61, Cys-64, and Cys-70.

Belongs to the FeoC family.

May function as a transcriptional regulator that controls feoABC expression. This Escherichia coli O17:K52:H18 (strain UMN026 / ExPEC) protein is Probable [Fe-S]-dependent transcriptional repressor.